A 78-amino-acid polypeptide reads, in one-letter code: UPF0291 protein Ldb1355 (78 aa).

It belongs to the UPF0291 family.

It localises to the cytoplasm. The polypeptide is UPF0291 protein Ldb1355 (Lactobacillus delbrueckii subsp. bulgaricus (strain ATCC 11842 / DSM 20081 / BCRC 10696 / JCM 1002 / NBRC 13953 / NCIMB 11778 / NCTC 12712 / WDCM 00102 / Lb 14)).